Reading from the N-terminus, the 394-residue chain is NAD(P)H-quinone oxidoreductase subunit H (394 aa).

Belongs to the complex I 49 kDa subunit family. NDH-1 can be composed of about 15 different subunits; different subcomplexes with different compositions have been identified which probably have different functions.

It is found in the cellular thylakoid membrane. It catalyses the reaction a plastoquinone + NADH + (n+1) H(+)(in) = a plastoquinol + NAD(+) + n H(+)(out). The enzyme catalyses a plastoquinone + NADPH + (n+1) H(+)(in) = a plastoquinol + NADP(+) + n H(+)(out). NDH-1 shuttles electrons from an unknown electron donor, via FMN and iron-sulfur (Fe-S) centers, to quinones in the respiratory and/or the photosynthetic chain. The immediate electron acceptor for the enzyme in this species is believed to be plastoquinone. Couples the redox reaction to proton translocation, and thus conserves the redox energy in a proton gradient. Cyanobacterial NDH-1 also plays a role in inorganic carbon-concentration. This Synechococcus sp. (strain CC9311) protein is NAD(P)H-quinone oxidoreductase subunit H.